The chain runs to 545 residues: E3 ubiquitin-protein ligase ipaH9.8 (545 aa).

The interval 1–242 (MLPINNNFSL…YHGPRIYFSM (242 aa)) is interaction with target proteins. 8 LRR repeats span residues 57 to 77 (NSDE…NLPA), 78 to 99 (QITL…PVTL), 100 to 117 (KKLY…VLPP), 118 to 139 (ALES…PDSL), 140 to 157 (LTMN…SLPQ), 158 to 179 (ALKN…SEGN), 182 to 203 (VVRE…ILNL), and 205 to 228 (NECS…QRLT). The tract at residues 243 to 250 (SDGQQNTL) is linker. Residues 251–545 (HRPLADAVTA…SENGSQLHHS (295 aa)) are E3 ubiquitin-protein ligase catalytic domain. Residues 253–545 (PLADAVTAWF…SENGSQLHHS (293 aa)) form the NEL domain. Cys337 serves as the catalytic Glycyl thioester intermediate.

Belongs to the LRR-containing bacterial E3 ligase family. Also interacts with human and mouse U2AF1 (U2AF35). Ubiquitinated in the presence of host E1 ubiquitin-activating enzyme, E2 ubiquitin-conjugating enzyme and ubiquitin.

The protein localises to the secreted. It localises to the host cytoplasm. Its subcellular location is the host nucleus. The catalysed reaction is S-ubiquitinyl-[E2 ubiquitin-conjugating enzyme]-L-cysteine + [acceptor protein]-L-lysine = [E2 ubiquitin-conjugating enzyme]-L-cysteine + N(6)-ubiquitinyl-[acceptor protein]-L-lysine.. Its activity is regulated as follows. Exists in an autoinhibited state in the absence of substrate protein, due to interactions of the leucine-rich repeats with NEL domain. Is activated upon binding to a substrate protein. In terms of biological role, effector E3 ubiquitin ligase that interferes with host's ubiquitination pathway and modulates the acute inflammatory responses, thus facilitating bacterial colonization within the host cell. Interacts with IKBKG (NEMO) and TNIP1 (ABIN-1), a ubiquitin-binding adapter protein, which results in TNIP1-dependent 'Lys-27'-linked polyubiquitination of IKBKG. Consequently, polyubiquitinated IKBKG undergoes proteasome-dependent degradation, which perturbs NF-kappa-B activation during bacterial infection. Mediates polyubiquitination of host U2AF1, leading to its proteasomal degradation. Catalyzes 'Lys-48'-linked polyubiquitination and subsequent degradation of a subset of host guanylate-binding proteins (GBP1, GBP2, GBP4 and GBP6), thereby suppressing host cell defense. In contrast, host GBP3 and GBP7 are not ubiquitinated by IpaH9.8. Uses UBE2D2 (UBCH5B) as an E2 ubiquitin-conjugating enzyme. In Shigella sonnei (strain Ss046), this protein is E3 ubiquitin-protein ligase ipaH9.8 (ipaH9.8).